A 275-amino-acid polypeptide reads, in one-letter code: MKLKFTKMHGLGNDFIVIDAINQSVSLDPATIRRWADRHFGIGFDQLLVVEKPGESGDFRYRIFNADGGEVEQCGNGARCFARFVRDHDLTRKNTIRVETACGIIMPTVEENGEVSVDMGIPRFDPARIPFITQERALTYPLNVNDREIEISAVSMGNPHAVQIVPDIDLAPVTSEGPAIESHPFFPEKVNAGYMQIVDRTHIRLRVFERGTGETLACGTGACAAVVSGISRGLLDSEVQVTMRGGNLRIRWEGEDQPVWMTGPAVSVFEGTIDL.

Positions 13, 46, and 65 each coordinate substrate. The Proton donor role is filled by cysteine 74. Residues 75-76 (GN), asparagine 158, asparagine 191, and 209-210 (ER) contribute to the substrate site. The active-site Proton acceptor is the cysteine 218. Residue 219–220 (GT) coordinates substrate.

It belongs to the diaminopimelate epimerase family. As to quaternary structure, homodimer.

The protein localises to the cytoplasm. It catalyses the reaction (2S,6S)-2,6-diaminopimelate = meso-2,6-diaminopimelate. It participates in amino-acid biosynthesis; L-lysine biosynthesis via DAP pathway; DL-2,6-diaminopimelate from LL-2,6-diaminopimelate: step 1/1. Catalyzes the stereoinversion of LL-2,6-diaminopimelate (L,L-DAP) to meso-diaminopimelate (meso-DAP), a precursor of L-lysine and an essential component of the bacterial peptidoglycan. The sequence is that of Diaminopimelate epimerase from Nitrosomonas europaea (strain ATCC 19718 / CIP 103999 / KCTC 2705 / NBRC 14298).